The chain runs to 466 residues: Glutamate--tRNA ligase 1 (466 aa).

Residues 9-19 carry the 'HIGH' region motif; that stretch reads PSPTGMLHIGG. The 'KMSKS' region signature appears at 238 to 242; sequence KLSKR. Position 241 (K241) interacts with ATP.

The protein belongs to the class-I aminoacyl-tRNA synthetase family. Glutamate--tRNA ligase type 1 subfamily. In terms of assembly, monomer.

It localises to the cytoplasm. It catalyses the reaction tRNA(Glu) + L-glutamate + ATP = L-glutamyl-tRNA(Glu) + AMP + diphosphate. Catalyzes the attachment of glutamate to tRNA(Glu) in a two-step reaction: glutamate is first activated by ATP to form Glu-AMP and then transferred to the acceptor end of tRNA(Glu). The protein is Glutamate--tRNA ligase 1 of Acidiphilium cryptum (strain JF-5).